The chain runs to 191 residues: Protein GrpE (191 aa).

Composition is skewed to basic and acidic residues over residues 1–19 (MKDE…EPES) and 29–45 (QQGE…GEIK). Positions 1–45 (MKDEHNQEHDHLSPKEPESYQKAYACKEQQGEEKQEASEKEGEIK) are disordered.

It belongs to the GrpE family. In terms of assembly, homodimer.

It is found in the cytoplasm. In terms of biological role, participates actively in the response to hyperosmotic and heat shock by preventing the aggregation of stress-denatured proteins, in association with DnaK and GrpE. It is the nucleotide exchange factor for DnaK and may function as a thermosensor. Unfolded proteins bind initially to DnaJ; upon interaction with the DnaJ-bound protein, DnaK hydrolyzes its bound ATP, resulting in the formation of a stable complex. GrpE releases ADP from DnaK; ATP binding to DnaK triggers the release of the substrate protein, thus completing the reaction cycle. Several rounds of ATP-dependent interactions between DnaJ, DnaK and GrpE are required for fully efficient folding. In Helicobacter pylori (strain J99 / ATCC 700824) (Campylobacter pylori J99), this protein is Protein GrpE.